The following is a 312-amino-acid chain: Ribonuclease H2 subunit B (312 aa).

Ala2 carries the post-translational modification N-acetylalanine. The disordered stretch occupies residues 236–256 (EPSASLPNPPSKKIKLSDEPV). Lys295 carries the post-translational modification N6-acetyllysine. Residue Ser296 is modified to Phosphoserine.

It belongs to the RNase H2 subunit B family. The RNase H2 complex is a heterotrimer composed of the catalytic subunit RNASEH2A and the non-catalytic subunits RNASEH2B and RNASEH2C. Widely expressed.

The protein resides in the nucleus. Its function is as follows. Non catalytic subunit of RNase H2, an endonuclease that specifically degrades the RNA of RNA:DNA hybrids. Participates in DNA replication, possibly by mediating the removal of lagging-strand Okazaki fragment RNA primers during DNA replication. Mediates the excision of single ribonucleotides from DNA:RNA duplexes. The polypeptide is Ribonuclease H2 subunit B (RNASEH2B) (Homo sapiens (Human)).